We begin with the raw amino-acid sequence, 175 residues long: uncharacterized protein (175 aa).

The region spanning 1-173 (MYKNIIKLIS…VYKEKYKKLL (173 aa)) is the Macro domain.

Belongs to the MacroD-type family.

This is an uncharacterized protein from Fusobacterium nucleatum subsp. nucleatum (strain ATCC 25586 / DSM 15643 / BCRC 10681 / CIP 101130 / JCM 8532 / KCTC 2640 / LMG 13131 / VPI 4355).